The sequence spans 390 residues: Pyruvate dehydrogenase E1 component subunit alpha, somatic form, mitochondrial (390 aa).

The N-terminal 29 residues, 1–29 (MRKMLAAVSRVLSGASQKPASRVLVASRN), are a transit peptide targeting the mitochondrion. At lysine 63 the chain carries N6-acetyllysine; alternate. Lysine 63 carries the N6-succinyllysine; alternate modification. Residues histidine 92, tyrosine 118, arginine 119, alanine 157, glycine 165, valine 167, aspartate 196, glycine 197, alanine 198, asparagine 225, and tyrosine 227 each coordinate pyruvate. Thiamine diphosphate-binding residues include tyrosine 118 and arginine 119. Positions 165, 167, 196, 197, 198, and 225 each coordinate thiamine diphosphate. Aspartate 196 provides a ligand contact to Mg(2+). Positions 225 and 227 each coordinate Mg(2+). Serine 232 is modified (phosphoserine; by PDK1). Lysine 244 bears the N6-acetyllysine; alternate mark. An N6-succinyllysine; alternate modification is found at lysine 244. Residue lysine 277 is modified to N6-succinyllysine. Histidine 292 is a thiamine diphosphate binding site. A Phosphoserine; by PDK1, PDK2, PDK3 and PDK4 modification is found at serine 293. Serine 295 carries the post-translational modification Phosphoserine. Serine 300 bears the Phosphoserine; by PDK1, PDK2, PDK3 and PDK4 mark. Tyrosine 301 carries the post-translational modification Phosphotyrosine. An N6-acetyllysine; alternate modification is found at lysine 313. Position 313 is an N6-succinyllysine; alternate (lysine 313). Lysine 321 and lysine 336 each carry N6-acetyllysine. The residue at position 385 (lysine 385) is an N6-succinyllysine.

Heterotetramer of two PDHA1 and two PDHB subunits. The heterotetramer interacts with DLAT, and is part of the multimeric pyruvate dehydrogenase complex that contains multiple copies of pyruvate dehydrogenase (E1), dihydrolipoamide acetyltransferase (DLAT, E2) and lipoamide dehydrogenase (DLD, E3). These subunits are bound to an inner core composed of about 48 DLAT and 12 PDHX molecules. Thiamine diphosphate is required as a cofactor. Requires Mg(2+) as cofactor. In terms of processing, phosphorylation at Ser-232, Ser-293 and Ser-300 by PDK family kinases inactivates the enzyme; for this phosphorylation at a single site is sufficient. Phosphorylation at Ser-293 interferes with access to active site, and thereby inactivates the enzyme. Dephosphorylation at all three sites, i.e. at Ser-232, Ser-293 and Ser-300, is required for reactivation. Post-translationally, acetylation alters the phosphorylation pattern. Deacetylated by SIRT3.

The protein resides in the mitochondrion matrix. The enzyme catalyses N(6)-[(R)-lipoyl]-L-lysyl-[protein] + pyruvate + H(+) = N(6)-[(R)-S(8)-acetyldihydrolipoyl]-L-lysyl-[protein] + CO2. Pyruvate dehydrogenase activity is inhibited by phosphorylation of PDHA1; it is reactivated by dephosphorylation. The pyruvate dehydrogenase complex catalyzes the overall conversion of pyruvate to acetyl-CoA and CO(2), and thereby links the glycolytic pathway to the tricarboxylic cycle. This is Pyruvate dehydrogenase E1 component subunit alpha, somatic form, mitochondrial (PDHA1) from Pan troglodytes (Chimpanzee).